The chain runs to 276 residues: ADP-dependent (S)-NAD(P)H-hydrate dehydratase (276 aa).

Positions 7–274 (METLNSINIP…NEIPYAMKQL (268 aa)) constitute a YjeF C-terminal domain. Positions 42, 105, and 154 each coordinate (6S)-NADPHX. Residue G216 participates in AMP binding. Residue D217 participates in (6S)-NADPHX binding.

This sequence belongs to the NnrD/CARKD family. In terms of assembly, homotetramer. It depends on Mg(2+) as a cofactor.

The enzyme catalyses (6S)-NADHX + ADP = AMP + phosphate + NADH + H(+). It carries out the reaction (6S)-NADPHX + ADP = AMP + phosphate + NADPH + H(+). Functionally, catalyzes the dehydration of the S-form of NAD(P)HX at the expense of ADP, which is converted to AMP. Together with NAD(P)HX epimerase, which catalyzes the epimerization of the S- and R-forms, the enzyme allows the repair of both epimers of NAD(P)HX, a damaged form of NAD(P)H that is a result of enzymatic or heat-dependent hydration. The chain is ADP-dependent (S)-NAD(P)H-hydrate dehydratase from Staphylococcus aureus (strain NCTC 8325 / PS 47).